The primary structure comprises 645 residues: MARSCKILAKLPRVGTAISNLTNVCEEMRRHIVLATQETAPLFEEAAILMSQQQEVETKEKILDAFNNHFILSEDELSSLTSSAKPVDDLFFDALARMKQIHKDCEVLLGSENQRLGLDIMEQSSKNLNGAFQKLYKWIQKEFKSLNLEDPQISLSIRRALRVLAERPSLFHNCLDSFADAREYTLSDSFHTALTDVPSGQERDMAARPIEFSAHDPLRYVGDMLAWVHSAAVSEREALEALFIGDEGEIAKGIQAGVNNEPWSRVDGEEIVFDGPKALNDLVTRDLNGVTRSLRQRVELVLQGNEDSIVIYKIIGLLAFYENTFSKLLGRESGLVTSVASLQEFAFKHFQILMQDQLAVVSAEPANLTPPADLSTPQFLHDALDNLTSLMKAYDSSFAHEHANDSSGENKFSPIIREALDPFLELAKTSSNDISDPTSRAVFHVNCLLSTRDAISPYPFVCVTHLPQLTNTLKTLRTTLLEIQHEFLLNASGLHILLTALKPFTPPATATLEPTRSSYPPDLATISSLPEFQPQTLSSISQQLDDFLPSALVDVTENLKAIHSPVLVKSVTEEAVEAFCTDFEFVEGMILGADEARGKLVVHGDGEDVGAEEAGEGEGEEPQADNWRLRSLFPRTTGEIRVLLS.

Belongs to the COG6 family.

The protein resides in the golgi apparatus membrane. Acts as a component of the peripheral membrane COG complex that is involved in intra-Golgi protein trafficking. COG is located at the cis-Golgi, and regulates tethering of retrograde intra-Golgi vesicles and possibly a number of other membrane trafficking events. This is Conserved oligomeric Golgi complex subunit 6 (COG6) from Ajellomyces capsulatus (strain NAm1 / WU24) (Darling's disease fungus).